Here is a 735-residue protein sequence, read N- to C-terminus: Ion-translocating oxidoreductase complex subunit C (735 aa).

2 4Fe-4S ferredoxin-type domains span residues Met-368–Tyr-397 and Lys-407–Phe-436. Residues Cys-377, Cys-380, Cys-383, Cys-387, Cys-416, Cys-419, Cys-422, and Cys-426 each coordinate [4Fe-4S] cluster. Residues Ala-562–Ala-713 are disordered.

The protein belongs to the 4Fe4S bacterial-type ferredoxin family. RnfC subfamily. The complex is composed of six subunits: RsxA, RsxB, RsxC, RsxD, RsxE and RsxG. [4Fe-4S] cluster is required as a cofactor.

Its subcellular location is the cell inner membrane. Part of a membrane-bound complex that couples electron transfer with translocation of ions across the membrane. Required to maintain the reduced state of SoxR. The protein is Ion-translocating oxidoreductase complex subunit C of Salmonella newport (strain SL254).